An 858-amino-acid polypeptide reads, in one-letter code: MVNFTVDQIRAIMDKKSNIRNMSVIAHVDHGKSTLTDSLVSKAGIIASARAGETRFTDTRKDEQERCITIKSTAISMYYELTENDLAFIKQCKDGSGFLINLIDSPGHVDFSSEVTAALRVTDGALVVVDCVSGVCVQTETVLRQAIAERIKPVLMMNKMDRALLELQLEPEELYQTFQRIVENVNVIISTYGEDEGGPMGNIMIDPVIGTVGFGSGLHGWAFTLKQFAEMYVAKFASKGEAQLSPADRCKKVEDMMKKLWGDRYFDPAGGKFTKTANGPDGKKYPRTFAQLILDPIFKVFDAIMNFKKEETAKLIEKLDIKLDTEDKDKEGKPLLKAVMRRWLPAGEALLQMITIHLPSPVTAQKYRCELLYEGPGDDEAAMGIKNCDPKGPLMMYISKMVPTTDKGRFYAFGRVFSGVVSTGLKVRIMGPNYTPGKKEDLYLKPIQRTILMMGRYVEPIEDVPCGNIVGLVGVDQFLVKTGTITTFDQAHNMRVMKFSVSPVVRVAVEAKNPADLPKLVEGLKRLAKSDPMVQCIIEESGEHIIAGAGELHLEICLKDLEEDHACIPLKKSDPVVSYRETVSAESDQMCLSKSPNKHNRLYMKARPFPDGLAEDIDKGDVSSRQELKTRARYLADKYEWEVTEARKIWCFGPDGTGPNMLVDVTKGVQYLNEIKDSVVAGFQWATKEGALCEENMRAVRFDIHDVTLHTDAIHRGGGQIIPTARRVLYACQLTAEPRLMEPIYLVEIQCPEQVVGGIYGVLNRKRGHVFEESQVMGTPMFVVKAYLPVNESFGFTADLRSNTGGQAFPQCVFDHWQILPGDPKDAASKPCQIVADTRKRKGLKEGIPALDNFLDKL.

The tr-type G domain occupies 17 to 362; that stretch reads SNIRNMSVIA…MITIHLPSPV (346 aa). GTP is bound by residues 26–33, 158–161, and 216–218; these read AHVDHGKS, NKMD, and SGL. His-715 carries the diphthamide modification.

This sequence belongs to the TRAFAC class translation factor GTPase superfamily. Classic translation factor GTPase family. EF-G/EF-2 subfamily. Binds to 80S ribosomes. Actively translating ribosomes show mutually exclusive binding of eIF5a (EIF5A or EIF5A2) and EEF2/eEF2. Interacts with serbp1; interaction sequesters eef2/eEF2 at the A-site of the ribosome, thereby blocking the interaction sites of the mRNA-tRNA complex, promoting ribosome stabilization and hibernation. Interacts with habp4; interaction takes place at the A-site of hibernating ribosomes and promotes ribosome stabilization.

It localises to the cytoplasm. The protein resides in the nucleus. It carries out the reaction GTP + H2O = GDP + phosphate + H(+). Catalyzes the GTP-dependent ribosomal translocation step during translation elongation. During this step, the ribosome changes from the pre-translocational (PRE) to the post-translocational (POST) state as the newly formed A-site-bound peptidyl-tRNA and P-site-bound deacylated tRNA move to the P and E sites, respectively. Catalyzes the coordinated movement of the two tRNA molecules, the mRNA and conformational changes in the ribosome. The protein is Elongation factor 2b of Danio rerio (Zebrafish).